Consider the following 292-residue polypeptide: MQTVTDPVEMQTISEKLRLGRQLIGVVMTMGALHEGHISLVKLAREQAGTVILTIFVNPTQFGPNEDFHRYPRPFEQDAALARSAGVDYLFAPEAGAIYPEGFSTAISCSGVSDLLEGEKRPGHFSGVATVVTKLLNITRPHLAVFGEKDAQQLAVIRRVVTDLNIPVKVVAAPTMRESNGLAVSSRNIYLTAGQRESAGAIWRSLQHALDRLAAGETGLKELAEATATMIASESGFRVDYVAFVDEETFMPAERALKGRSYRILAAVFAGGIRLIDNACFASPTHIAGEEA.

M30–H37 contributes to the ATP binding site. H37 acts as the Proton donor in catalysis. Q61 contacts (R)-pantoate. Q61 is a binding site for beta-alanine. ATP is bound at residue G147–D150. Q153 lines the (R)-pantoate pocket. Residue V184–R187 coordinates ATP.

The protein belongs to the pantothenate synthetase family. As to quaternary structure, homodimer.

It localises to the cytoplasm. The catalysed reaction is (R)-pantoate + beta-alanine + ATP = (R)-pantothenate + AMP + diphosphate + H(+). It functions in the pathway cofactor biosynthesis; (R)-pantothenate biosynthesis; (R)-pantothenate from (R)-pantoate and beta-alanine: step 1/1. Functionally, catalyzes the condensation of pantoate with beta-alanine in an ATP-dependent reaction via a pantoyl-adenylate intermediate. The sequence is that of Pantothenate synthetase from Chlorobium phaeovibrioides (strain DSM 265 / 1930) (Prosthecochloris vibrioformis (strain DSM 265)).